The primary structure comprises 193 residues: Putative 3-methyladenine DNA glycosylase (193 aa).

It belongs to the DNA glycosylase MPG family.

In Agrobacterium fabrum (strain C58 / ATCC 33970) (Agrobacterium tumefaciens (strain C58)), this protein is Putative 3-methyladenine DNA glycosylase.